The primary structure comprises 160 residues: Large ribosomal subunit protein uL22c (160 aa).

This sequence belongs to the universal ribosomal protein uL22 family. In terms of assembly, part of the 50S ribosomal subunit.

It is found in the plastid. It localises to the chloroplast. This protein binds specifically to 23S rRNA. Its function is as follows. The globular domain of the protein is located near the polypeptide exit tunnel on the outside of the subunit, while an extended beta-hairpin is found that lines the wall of the exit tunnel in the center of the 70S ribosome. This Nasturtium officinale (Watercress) protein is Large ribosomal subunit protein uL22c (rpl22).